The sequence spans 157 residues: Siroheme decarboxylase NirG subunit (157 aa).

The protein belongs to the Ahb/Nir family. In terms of assembly, forms a complex composed of NirDL, NirG and NirH. All proteins are required for the total conversion of siroheme to didecarboxysiroheme.

The catalysed reaction is siroheme + 2 H(+) = 12,18-didecarboxysiroheme + 2 CO2. It participates in porphyrin-containing compound metabolism. Functionally, involved in heme d1 biosynthesis. Catalyzes the decarboxylation of siroheme into didecarboxysiroheme. Siroheme is probably decarboxylated to monodecarboxysiroheme, which is in turn decarboxylated to didecarboxysiroheme. In Paracoccus pantotrophus (Thiosphaera pantotropha), this protein is Siroheme decarboxylase NirG subunit.